A 452-amino-acid polypeptide reads, in one-letter code: Cell division protein FtsZ (452 aa).

GTP contacts are provided by residues 24–28, 111–113, Glu142, Arg146, and Asp190; these read GAGSN and GTG.

The protein belongs to the FtsZ family. As to quaternary structure, homodimer. Polymerizes to form a dynamic ring structure in a strictly GTP-dependent manner. Interacts directly with several other division proteins.

The protein localises to the cytoplasm. Its function is as follows. Essential cell division protein that forms a contractile ring structure (Z ring) at the future cell division site. The regulation of the ring assembly controls the timing and the location of cell division. One of the functions of the FtsZ ring is to recruit other cell division proteins to the septum to produce a new cell wall between the dividing cells. Binds GTP and shows GTPase activity. In Rickettsia prowazekii (strain Madrid E), this protein is Cell division protein FtsZ.